The following is a 317-amino-acid chain: Transaldolase 1 (317 aa).

Residue K132 is the Schiff-base intermediate with substrate of the active site.

It belongs to the transaldolase family. Type 1 subfamily. In terms of assembly, homodimer.

It is found in the cytoplasm. The enzyme catalyses D-sedoheptulose 7-phosphate + D-glyceraldehyde 3-phosphate = D-erythrose 4-phosphate + beta-D-fructose 6-phosphate. It functions in the pathway carbohydrate degradation; pentose phosphate pathway; D-glyceraldehyde 3-phosphate and beta-D-fructose 6-phosphate from D-ribose 5-phosphate and D-xylulose 5-phosphate (non-oxidative stage): step 2/3. Its function is as follows. Transaldolase is important for the balance of metabolites in the pentose-phosphate pathway. The sequence is that of Transaldolase 1 from Shigella sonnei (strain Ss046).